A 470-amino-acid polypeptide reads, in one-letter code: Poly(A) polymerase catalytic subunit (470 aa).

Catalysis depends on residues Asp-192 and Asp-194.

This sequence belongs to the poxviridae poly(A) polymerase catalytic subunit family. As to quaternary structure, heterodimer of a large (catalytic) subunit and a small (regulatory) subunit.

It catalyses the reaction RNA(n) + ATP = RNA(n)-3'-adenine ribonucleotide + diphosphate. In terms of biological role, polymerase that creates the 3'-poly(A) tail of mRNA's. In Erythrocebus patas (Red guenon), this protein is Poly(A) polymerase catalytic subunit (PAPL).